The sequence spans 399 residues: S-adenosylmethionine synthase (399 aa).

His-17 serves as a coordination point for ATP. Asp-19 provides a ligand contact to Mg(2+). Glu-45 is a binding site for K(+). 2 residues coordinate L-methionine: Glu-58 and Gln-101. The flexible loop stretch occupies residues 101-111 (QSPDIAQGVDE). ATP contacts are provided by residues 177–179 (DAK), 244–245 (RF), Asp-253, 259–260 (RK), Ala-276, and Lys-280. Asp-253 contributes to the L-methionine binding site. An L-methionine-binding site is contributed by Lys-284.

Belongs to the AdoMet synthase family. In terms of assembly, homotetramer; dimer of dimers. Requires Mg(2+) as cofactor. K(+) is required as a cofactor.

It localises to the cytoplasm. The enzyme catalyses L-methionine + ATP + H2O = S-adenosyl-L-methionine + phosphate + diphosphate. It functions in the pathway amino-acid biosynthesis; S-adenosyl-L-methionine biosynthesis; S-adenosyl-L-methionine from L-methionine: step 1/1. Its function is as follows. Catalyzes the formation of S-adenosylmethionine (AdoMet) from methionine and ATP. The overall synthetic reaction is composed of two sequential steps, AdoMet formation and the subsequent tripolyphosphate hydrolysis which occurs prior to release of AdoMet from the enzyme. This Listeria innocua serovar 6a (strain ATCC BAA-680 / CLIP 11262) protein is S-adenosylmethionine synthase.